A 582-amino-acid polypeptide reads, in one-letter code: Formate--tetrahydrofolate ligase (582 aa).

Residue 65-72 coordinates ATP; it reads TPLGEGKT.

It belongs to the formate--tetrahydrofolate ligase family.

It catalyses the reaction (6S)-5,6,7,8-tetrahydrofolate + formate + ATP = (6R)-10-formyltetrahydrofolate + ADP + phosphate. It participates in one-carbon metabolism; tetrahydrofolate interconversion. This is Formate--tetrahydrofolate ligase from Vibrio parahaemolyticus serotype O3:K6 (strain RIMD 2210633).